Reading from the N-terminus, the 192-residue chain is MKKVGVLSLQGDFAAHGAALERAGAQPVFVREREQLNQIEGLILPGGESTTMLKLLRYEDLFDDVAEFGRTKPVFGTCAGAILMAKGVTNPAQESFGLVDIEVERNAYGRQTDSRIAQVRPFPDFENRTAPGELKAVFIRAPIIRRIEDGVRVLASYQGDPVLIEQGRFLVATFHPELTDDARVHSLFLSKL.

L-glutamine is bound at residue 47–49 (GES). Cysteine 78 serves as the catalytic Nucleophile. L-glutamine-binding positions include arginine 105 and 139–140 (IR). Catalysis depends on charge relay system residues histidine 175 and glutamate 177.

It belongs to the glutaminase PdxT/SNO family. In terms of assembly, in the presence of PdxS, forms a dodecamer of heterodimers. Only shows activity in the heterodimer.

The enzyme catalyses aldehydo-D-ribose 5-phosphate + D-glyceraldehyde 3-phosphate + L-glutamine = pyridoxal 5'-phosphate + L-glutamate + phosphate + 3 H2O + H(+). It catalyses the reaction L-glutamine + H2O = L-glutamate + NH4(+). Its pathway is cofactor biosynthesis; pyridoxal 5'-phosphate biosynthesis. Its function is as follows. Catalyzes the hydrolysis of glutamine to glutamate and ammonia as part of the biosynthesis of pyridoxal 5'-phosphate. The resulting ammonia molecule is channeled to the active site of PdxS. The protein is Pyridoxal 5'-phosphate synthase subunit PdxT of Solibacter usitatus (strain Ellin6076).